Reading from the N-terminus, the 295-residue chain is Indole-3-glycerol phosphate synthase (295 aa).

The protein belongs to the TrpC family.

The catalysed reaction is 1-(2-carboxyphenylamino)-1-deoxy-D-ribulose 5-phosphate + H(+) = (1S,2R)-1-C-(indol-3-yl)glycerol 3-phosphate + CO2 + H2O. Its pathway is amino-acid biosynthesis; L-tryptophan biosynthesis; L-tryptophan from chorismate: step 4/5. The chain is Indole-3-glycerol phosphate synthase from Prochlorococcus marinus subsp. pastoris (strain CCMP1986 / NIES-2087 / MED4).